The sequence spans 105 residues: Small ribosomal subunit protein uS10 (105 aa).

The protein belongs to the universal ribosomal protein uS10 family. As to quaternary structure, part of the 30S ribosomal subunit.

Involved in the binding of tRNA to the ribosomes. The polypeptide is Small ribosomal subunit protein uS10 (Maridesulfovibrio salexigens (strain ATCC 14822 / DSM 2638 / NCIMB 8403 / VKM B-1763) (Desulfovibrio salexigens)).